The sequence spans 124 residues: Histone H2A (124 aa).

Residues 1-18 are compositionally biased toward basic residues; it reads MSGRGKGGKAKGKSKSRS. The tract at residues 1-23 is disordered; it reads MSGRGKGGKAKGKSKSRSSRAGL. An N-acetylserine modification is found at Ser2. Ser2 bears the Phosphoserine mark. Gln104 is modified (N5-methylglutamine).

The protein belongs to the histone H2A family. In terms of assembly, the nucleosome is a histone octamer containing two molecules each of H2A, H2B, H3 and H4 assembled in one H3-H4 heterotetramer and two H2A-H2B heterodimers. The octamer wraps approximately 147 bp of DNA. The N-terminal serine is acetylated. That serine is also phosphorylated in approximately 60% of the molecules isolated from erythrocytes.

The protein resides in the nucleus. Its subcellular location is the chromosome. In terms of biological role, core component of nucleosome. Nucleosomes wrap and compact DNA into chromatin, limiting DNA accessibility to the cellular machineries which require DNA as a template. Histones thereby play a central role in transcription regulation, DNA repair, DNA replication and chromosomal stability. DNA accessibility is regulated via a complex set of post-translational modifications of histones, also called histone code, and nucleosome remodeling. This chain is Histone H2A, found in Sipunculus nudus (Sipunculan worm).